Consider the following 651-residue polypeptide: MSEKLYPVLPEAKKNTLIDNETYLEWYEESVSDPDGFWAKHGRRIDWFKPFTKVKNTDFNGDVTIKWYEDGVTNVSYNCIDRHLKSRGDKVAIIWEGDNPYIDKKITYRELYENVCRMANVLKKHGVKKGDRVTIYLPMIPEAAYAMLACARIGAVHSVVFAGFSPEALAGRIVDCESTFVITADEGVRGGKPVALKENTDTAIDIAAKQYVMVNKVLVVRRTGGKVSWGRGRDLWYHQEVASVEPHCEPEPMNAEDPLFILYTSGSTGKPKGVLHTTGGYLVYASMTHQYVFDYHDGEIYWCTADVGWVTGHSYIVYGPLANGATTLMFEGVPNFPDQGRFWEVVDKHHVNIFYTAPTALRALMGAGDEFVTRSSRSTLRLLGSVGEPINPEAWEWYYNVVGDQKCPIVDTWWQTENGGILITPLPGATDLKPGSATRPFFGVKPVLVDNEGNVQEGVADGNLCISDSWPGQMRTVYGDHKRFIETYFSTYKGMYFSGDGCRRDEDGYYWITGRVDDVLNISGHRLGTAEIESALVSHHSVSEAAVVGYPHPIKGQGIYCYVTLMTGADAQDPDELRKELVQHVRKEIGPIATPDKIQFAPGLPKTRSGKIMRRILRKIAEDEFGALGDTSTLADPGVVDDLIENRQNKK.

Residues 189–192, T311, and N335 each bind CoA; that span reads RGGK. Residues 387 to 389, 411 to 416, D500, and R515 contribute to the ATP site; these read GEP and DTWWQT. CoA is bound at residue S523. Residue R526 coordinates ATP. Residues V537, H539, and V542 each contribute to the Mg(2+) site. R586 contacts CoA. K611 is modified (N6-acetyllysine).

It belongs to the ATP-dependent AMP-binding enzyme family. Requires Mg(2+) as cofactor. Post-translationally, acetylated. Deacetylation by the SIR2-homolog deacetylase activates the enzyme.

It carries out the reaction acetate + ATP + CoA = acetyl-CoA + AMP + diphosphate. Its function is as follows. Catalyzes the conversion of acetate into acetyl-CoA (AcCoA), an essential intermediate at the junction of anabolic and catabolic pathways. AcsA undergoes a two-step reaction. In the first half reaction, AcsA combines acetate with ATP to form acetyl-adenylate (AcAMP) intermediate. In the second half reaction, it can then transfer the acetyl group from AcAMP to the sulfhydryl group of CoA, forming the product AcCoA. This chain is Acetyl-coenzyme A synthetase, found in Brucella abortus (strain S19).